The sequence spans 62 residues: uncharacterized protein (62 aa).

This is an uncharacterized protein from Homo sapiens (Human).